The following is a 449-amino-acid chain: Telomere resolvase ResT (449 aa).

It depends on No cofactors were found to be necessary. as a cofactor.

The protein localises to the cytoplasm. It is found in the nucleoid. Catalyzes the conservative, sequence-specific DNA breakage and reunion reaction that generates two hairpin telomeres from a replicated telomere substrate. Breaks two phosphodiester bonds in a single DNA duplex and joins each end with the opposite DNA strand to form covalently closed hairpin telomeres. In vitro relaxed-circular, open-circular and linearized plasmids, but not supercoiled DNA, are all substrates. Cleavage is position-dependent relative to conserved sequence elements. The protein is Telomere resolvase ResT of Borreliella burgdorferi (strain ATCC 35210 / DSM 4680 / CIP 102532 / B31) (Borrelia burgdorferi).